Here is a 217-residue protein sequence, read N- to C-terminus: UPF0502 protein KPK_3478 (217 aa).

It belongs to the UPF0502 family.

This chain is UPF0502 protein KPK_3478, found in Klebsiella pneumoniae (strain 342).